Reading from the N-terminus, the 563-residue chain is Proline--tRNA ligase (563 aa).

This sequence belongs to the class-II aminoacyl-tRNA synthetase family. ProS type 1 subfamily. In terms of assembly, homodimer.

It is found in the cytoplasm. It catalyses the reaction tRNA(Pro) + L-proline + ATP = L-prolyl-tRNA(Pro) + AMP + diphosphate. In terms of biological role, catalyzes the attachment of proline to tRNA(Pro) in a two-step reaction: proline is first activated by ATP to form Pro-AMP and then transferred to the acceptor end of tRNA(Pro). As ProRS can inadvertently accommodate and process non-cognate amino acids such as alanine and cysteine, to avoid such errors it has two additional distinct editing activities against alanine. One activity is designated as 'pretransfer' editing and involves the tRNA(Pro)-independent hydrolysis of activated Ala-AMP. The other activity is designated 'posttransfer' editing and involves deacylation of mischarged Ala-tRNA(Pro). The misacylated Cys-tRNA(Pro) is not edited by ProRS. The sequence is that of Proline--tRNA ligase from Persephonella marina (strain DSM 14350 / EX-H1).